The chain runs to 335 residues: tRNA N6-adenosine threonylcarbamoyltransferase (335 aa).

A divalent metal cation is bound by residues H109, H113, and Y130. Residues 130-134 (YVSGG), D162, G177, E181, and N266 each bind substrate. Position 294 (D294) interacts with a divalent metal cation.

The protein belongs to the KAE1 / TsaD family. In terms of assembly, component of the EKC/KEOPS complex composed of at least tp53rk, tprkb, osgep and lage3; the whole complex dimerizes. It depends on a divalent metal cation as a cofactor.

Its subcellular location is the cytoplasm. The protein resides in the nucleus. The catalysed reaction is L-threonylcarbamoyladenylate + adenosine(37) in tRNA = N(6)-L-threonylcarbamoyladenosine(37) in tRNA + AMP + H(+). In terms of biological role, component of the EKC/KEOPS complex that is required for the formation of a threonylcarbamoyl group on adenosine at position 37 (t(6)A37) in tRNAs that read codons beginning with adenine. The complex is probably involved in the transfer of the threonylcarbamoyl moiety of threonylcarbamoyl-AMP (TC-AMP) to the N6 group of A37. OSGEP likely plays a direct catalytic role in this reaction, but requires other protein(s) of the complex to fulfill this activity. This is tRNA N6-adenosine threonylcarbamoyltransferase from Danio rerio (Zebrafish).